Consider the following 397-residue polypeptide: Odorant receptor 2a (397 aa).

Topologically, residues 1-38 are cytoplasmic; sequence MEKQEDFKLNTHSAVYYHWRVWELTGLMRPPGVSSLLY. The chain crosses the membrane as a helical span at residues 39-59; that stretch reads VVYSITVNLVVTVLFPLSLLA. The Extracellular portion of the chain corresponds to 60 to 72; sequence RLLFTTNMAGLCE. A helical membrane pass occupies residues 73–92; that stretch reads NLTITITDIVANLKFANVYM. At 93–131 the chain is on the cytoplasmic side; that stretch reads VRKQLHEIRSLLRLMDARARLVGDPEEISALRKEVNIAQ. The chain crosses the membrane as a helical span at residues 132–150; sequence GTFRTFASIFVFGTTLSCV. At 151 to 176 the chain is on the extracellular side; that stretch reads RVVVRPDRELLYPAWFGVDWMHSTRN. The chain crosses the membrane as a helical span at residues 177 to 197; it reads YVLINIYQLFGLIVQAIQNCA. The Cytoplasmic segment spans residues 198 to 272; it reads SDSYPPAFLC…IIQRVLSVPC (75 aa). Residues 273 to 293 form a helical membrane-spanning segment; sequence MAQFVCSAAVQCTVAMHFLYV. At 294 to 301 the chain is on the extracellular side; sequence ADDHDHTA. A helical transmembrane segment spans residues 302–322; it reads MIISIVFFSAVTLEVFVICYF. At 323 to 363 the chain is on the cytoplasmic side; sequence GDRMRTQSEALCDAFYDCNWIEQLPKFKRELLFTLARTQRP. The chain crosses the membrane as a helical span at residues 364 to 383; the sequence is SLIYAGNYIALSLETFEQVM. Residues 384-397 lie on the Extracellular side of the membrane; that stretch reads RFTYSVFTLLLRAK.

This sequence belongs to the insect chemoreceptor superfamily. Heteromeric odorant receptor channel (TC 1.A.69) family. Or2a subfamily. As to quaternary structure, interacts with Orco. Complexes exist early in the endomembrane system in olfactory sensory neurons (OSNs), coupling these complexes to the conserved ciliary trafficking pathway. In terms of tissue distribution, expressed in 20 sensory neurons on the distal edge of the antenna.

Its subcellular location is the cell membrane. Functionally, odorant receptor which mediates acceptance or avoidance behavior, depending on its substrates. The odorant receptor repertoire encodes a large collection of odor stimuli that vary widely in identity, intensity, and duration. May form a complex with Orco to form odorant-sensing units, providing sensitive and prolonged odorant signaling and calcium permeability. The sequence is that of Odorant receptor 2a (Or2a) from Drosophila melanogaster (Fruit fly).